A 475-amino-acid polypeptide reads, in one-letter code: Sensor histidine kinase GlrK (475 aa).

Topologically, residues 1 to 13 (MKRWPVFPRSLRQ) are cytoplasmic. Residues 14–34 (LVMLAFLLILLPLLVLAWQAW) traverse the membrane as a helical segment. Residues 35-173 (QSLNALSDQA…LQREIAERGQ (139 aa)) are Periplasmic-facing. A helical transmembrane segment spans residues 174-194 (YFGWQSLVLFLVSLVMVLLFT). Over 195–475 (RMIIGPVKNI…IELPSSKNTK (281 aa)) the chain is Cytoplasmic. The Histidine kinase domain occupies 256-472 (HLSHELKTPL…CFRIELPSSK (217 aa)). Position 259 is a phosphohistidine; by autocatalysis (H259).

Post-translationally, autophosphorylated.

It localises to the cell inner membrane. It carries out the reaction ATP + protein L-histidine = ADP + protein N-phospho-L-histidine.. Its function is as follows. Member of the two-component regulatory system GlrR/GlrK that up-regulates transcription of the glmY sRNA when cells enter the stationary growth phase. Activates GlrR by phosphorylation. In Escherichia coli (strain K12), this protein is Sensor histidine kinase GlrK (glrK).